Here is a 441-residue protein sequence, read N- to C-terminus: Glutamate--tRNA ligase 2 (441 aa).

Residues 9–19 (PSPTGYIHVGN) carry the 'HIGH' region motif. Residues 239 to 243 (ALSKR) carry the 'KMSKS' region motif. Lysine 242 is an ATP binding site.

Belongs to the class-I aminoacyl-tRNA synthetase family. Glutamate--tRNA ligase type 1 subfamily. In terms of assembly, monomer.

It is found in the cytoplasm. The catalysed reaction is tRNA(Glu) + L-glutamate + ATP = L-glutamyl-tRNA(Glu) + AMP + diphosphate. Catalyzes the attachment of glutamate to tRNA(Glu) in a two-step reaction: glutamate is first activated by ATP to form Glu-AMP and then transferred to the acceptor end of tRNA(Glu). The sequence is that of Glutamate--tRNA ligase 2 from Cereibacter sphaeroides (strain ATCC 17023 / DSM 158 / JCM 6121 / CCUG 31486 / LMG 2827 / NBRC 12203 / NCIMB 8253 / ATH 2.4.1.) (Rhodobacter sphaeroides).